A 98-amino-acid polypeptide reads, in one-letter code: Large ribosomal subunit protein bL25 (98 aa).

The tract at residues 1–23 (MANFVLNAQARAEDKQGKGASRR) is disordered.

This sequence belongs to the bacterial ribosomal protein bL25 family. As to quaternary structure, part of the 50S ribosomal subunit; part of the 5S rRNA/L5/L18/L25 subcomplex. Contacts the 5S rRNA. Binds to the 5S rRNA independently of L5 and L18.

Its function is as follows. This is one of the proteins that binds to the 5S RNA in the ribosome where it forms part of the central protuberance. In Acinetobacter baumannii (strain ATCC 17978 / DSM 105126 / CIP 53.77 / LMG 1025 / NCDC KC755 / 5377), this protein is Large ribosomal subunit protein bL25.